Here is a 150-residue protein sequence, read N- to C-terminus: 3-hydroxyacyl-[acyl-carrier-protein] dehydratase FabZ (150 aa).

The active site involves H51.

This sequence belongs to the thioester dehydratase family. FabZ subfamily.

It is found in the cytoplasm. The catalysed reaction is a (3R)-hydroxyacyl-[ACP] = a (2E)-enoyl-[ACP] + H2O. In terms of biological role, involved in unsaturated fatty acids biosynthesis. Catalyzes the dehydration of short chain beta-hydroxyacyl-ACPs and long chain saturated and unsaturated beta-hydroxyacyl-ACPs. In Legionella pneumophila subsp. pneumophila (strain Philadelphia 1 / ATCC 33152 / DSM 7513), this protein is 3-hydroxyacyl-[acyl-carrier-protein] dehydratase FabZ.